Reading from the N-terminus, the 173-residue chain is Translation initiation factor IF-3 (173 aa).

This sequence belongs to the IF-3 family. As to quaternary structure, monomer.

The protein resides in the cytoplasm. Its function is as follows. IF-3 binds to the 30S ribosomal subunit and shifts the equilibrium between 70S ribosomes and their 50S and 30S subunits in favor of the free subunits, thus enhancing the availability of 30S subunits on which protein synthesis initiation begins. In Bartonella bacilliformis (strain ATCC 35685 / KC583 / Herrer 020/F12,63), this protein is Translation initiation factor IF-3.